Reading from the N-terminus, the 37-residue chain is Cytochrome b6-f complex subunit 5 (37 aa).

A helical transmembrane segment spans residues 5 to 25 (LLCGIVLGLIPITLAGLFVAA).

This sequence belongs to the PetG family. The 4 large subunits of the cytochrome b6-f complex are cytochrome b6, subunit IV (17 kDa polypeptide, PetD), cytochrome f and the Rieske protein, while the 4 small subunits are PetG, PetL, PetM and PetN. The complex functions as a dimer.

The protein resides in the cellular thylakoid membrane. Component of the cytochrome b6-f complex, which mediates electron transfer between photosystem II (PSII) and photosystem I (PSI), cyclic electron flow around PSI, and state transitions. PetG is required for either the stability or assembly of the cytochrome b6-f complex. The polypeptide is Cytochrome b6-f complex subunit 5 (Cyanothece sp. (strain PCC 7425 / ATCC 29141)).